Reading from the N-terminus, the 220-residue chain is ATP synthase subunit beta, chloroplastic (220 aa).

The protein belongs to the ATPase alpha/beta chains family. In terms of assembly, F-type ATPases have 2 components, CF(1) - the catalytic core - and CF(0) - the membrane proton channel. CF(1) has five subunits: alpha(3), beta(3), gamma(1), delta(1), epsilon(1). CF(0) has four main subunits: a(1), b(1), b'(1) and c(9-12).

The protein resides in the plastid. It localises to the chloroplast thylakoid membrane. It carries out the reaction ATP + H2O + 4 H(+)(in) = ADP + phosphate + 5 H(+)(out). In terms of biological role, produces ATP from ADP in the presence of a proton gradient across the membrane. The catalytic sites are hosted primarily by the beta subunits. The chain is ATP synthase subunit beta, chloroplastic (atpB) from Osmundastrum cinnamomeum (Cinnamon fern).